The chain runs to 910 residues: Staphylococcal nuclease domain-containing protein 1 (910 aa).

N-acetylalanine is present on A2. 3 consecutive TNase-like domains span residues 18 to 166, 193 to 328, and 341 to 496; these read TVQR…MWSE, KPVN…IWRD, and KQFV…LHSK. Phosphothreonine is present on T103. The residue at position 193 (K193) is an N6-acetyllysine. The residue at position 240 (T240) is a Phosphothreonine. Short sequence motifs (nuclear localization signal) lie at residues 321–325 and 388–392; these read RRLRI and KKLRP. S426 is modified (phosphoserine). Residue K513 forms a Glycyl lysine isopeptide (Lys-Gly) (interchain with G-Cter in SUMO2) linkage. Residues 525–660 form the TNase-like 4 domain; the sequence is GRSEAVVEYV…KQKKEKVWAH (136 aa). Position 641 is an N6-acetyllysine (K641). S645 is subject to Phosphoserine. The Tudor domain occupies 729-787; the sequence is APRRGEFCIAKFVDGEWYRARVEKVESPAKIHVFYIDYGNREVLPSTRLGTLSPAFSTR. T779 carries the phosphothreonine modification. A phosphoserine mark is found at S781, S785, and S909.

In terms of assembly, forms a ternary complex with STAT6 and POLR2A. Associates with the RNA-induced silencing complex (RISC). Interacts with the RISC components AGO2, FMR1 and TNRC6A. Interacts with GTF2E1 and GTF2E2. Interacts with PIM1. Interacts with STAT5. Interacts with SYT11 (via C2 2 domain); the interaction with SYT11 is direct. As to quaternary structure, (Microbial infection) Interacts with EAV NSP1. Binds to acidic transactivation domain of EBNA2. Interacts with SARS-CoV-2 NSP9. Phosphorylated by PIM1 in vitro. Ubiquitously expressed.

Its subcellular location is the cytoplasm. It is found in the nucleus. It localises to the melanosome. It catalyses the reaction Endonucleolytic cleavage to nucleoside 3'-phosphates and 3'-phosphooligonucleotide end-products.. Endonuclease that mediates miRNA decay of both protein-free and AGO2-loaded miRNAs. As part of its function in miRNA decay, regulates mRNAs involved in G1-to-S phase transition. Functions as a bridging factor between STAT6 and the basal transcription factor. Plays a role in PIM1 regulation of MYB activity. Functions as a transcriptional coactivator for STAT5. In terms of biological role, (Microbial infection) Functions as a transcriptional coactivator for the Epstein-Barr virus nuclear antigen 2 (EBNA2). Functionally, (Microbial infection) Promotes SARS-CoV-2 RNA synthesis by binding to negative-sense RNA and the viral protein nsp9. The chain is Staphylococcal nuclease domain-containing protein 1 (SND1) from Homo sapiens (Human).